Here is a 255-residue protein sequence, read N- to C-terminus: 5'-nucleotidase SurE (255 aa).

A divalent metal cation contacts are provided by aspartate 8, aspartate 9, serine 40, and asparagine 93.

The protein belongs to the SurE nucleotidase family. It depends on a divalent metal cation as a cofactor.

It is found in the cytoplasm. The enzyme catalyses a ribonucleoside 5'-phosphate + H2O = a ribonucleoside + phosphate. Nucleotidase that shows phosphatase activity on nucleoside 5'-monophosphates. This is 5'-nucleotidase SurE from Rhodopseudomonas palustris (strain BisB5).